A 221-amino-acid chain; its full sequence is GTP cyclohydrolase III (221 aa).

The protein belongs to the archaeal-type GTP cyclohydrolase family.

It catalyses the reaction GTP + 3 H2O = 2-amino-5-formylamino-6-(5-phospho-D-ribosylamino)pyrimidin-4(3H)-one + 2 phosphate + 2 H(+). In terms of biological role, catalyzes the formation of 2-amino-5-formylamino-6-ribofuranosylamino-4(3H)-pyrimidinone ribonucleotide monophosphate and inorganic phosphate from GTP. Also has an independent pyrophosphate phosphohydrolase activity. The chain is GTP cyclohydrolase III from Pyrobaculum islandicum (strain DSM 4184 / JCM 9189 / GEO3).